We begin with the raw amino-acid sequence, 590 residues long: Vesicular glutamate transporter 3 (590 aa).

Residues 1–76 (MPLGGFAGLK…CGCFGLPKRY (76 aa)) are Cytoplasmic-facing. Residues 77–97 (IIAMLSGLGFCISFGIRCNLG) form a helical membrane-spanning segment. At 98–130 (VAIVEMVNNNTVYINGTAVMQPAQFNWDPETVG) the chain is on the vesicular side. 2 N-linked (GlcNAc...) asparagine glycosylation sites follow: asparagine 106 and asparagine 112. A helical membrane pass occupies residues 131 to 151 (LIHGSFFWGYIVTQIPGGFIS). The Cytoplasmic segment spans residues 152–153 (NK). The chain crosses the membrane as a helical span at residues 154 to 174 (LAANRVFGAAIFLTSVLNMFI). At 175–182 (PSAARVHY) the chain is on the vesicular side. The helical transmembrane segment at 183–203 (GCVMFVRILQGLVEGVTYPAC) threads the bilayer. Residues 204 to 221 (HGMWSKWAPPLERSRLAT) are Cytoplasmic-facing. Residues 222-242 (TSFCGSYAGAVIAMPLAGILV) traverse the membrane as a helical segment. Topologically, residues 243-249 (QYVGWPS) are vesicular. Residues 250–270 (VFYIYGVFGIIWYIFWILLAY) traverse the membrane as a helical segment. At 271-315 (NSPAVHPTISEEERNYIETSIGEGANLMSSTEKFKTPWREFFTSM) the chain is on the cytoplasmic side. A helical membrane pass occupies residues 316–336 (PVYAIIVANFCRSWTFYLLLI). At 337–354 (SQPAYFEEVFGFPISKVG) the chain is on the vesicular side. The helical transmembrane segment at 355–375 (ILSAVPHMVMTIIVPIGGQLA) threads the bilayer. Residues 376 to 391 (DFLRSRKILSTTTVRK) are Cytoplasmic-facing. The helical transmembrane segment at 392–412 (IMNCGGFGMEATLLLVVGFSH) threads the bilayer. Over 413 to 414 (TR) the chain is Vesicular. The helical transmembrane segment at 415–435 (AVAISFLILAVGFSGFAISGF) threads the bilayer. Over 436–448 (NVNHLDIAPRYAS) the chain is Cytoplasmic. The chain crosses the membrane as a helical span at residues 449 to 469 (ILMGISNGVGTLSGMVCPLIV). The Vesicular segment spans residues 470–482 (GALTKHKTRLEWQ). Residues 483 to 503 (HVFVIASMVHYTGVIFYAIFA) form a helical membrane-spanning segment. Residues 504-587 (SGEKQDWADP…NHYENGEYQT (84 aa)) lie on the Cytoplasmic side of the membrane. Acidic residues predominate over residues 526–535 (EDELADETEP). The tract at residues 526–590 (EDELADETEP…ENGEYQTQYQ (65 aa)) is disordered. Over residues 536–557 (SSDSGLATRQKTYGTTDNSSGR) the composition is skewed to polar residues.

This sequence belongs to the major facilitator superfamily. Sodium/anion cotransporter family. VGLUT subfamily.

It is found in the cytoplasmic vesicle. It localises to the secretory vesicle. Its subcellular location is the synaptic vesicle membrane. The protein localises to the cell membrane. The protein resides in the synapse. It is found in the synaptosome. It carries out the reaction L-glutamate(out) = L-glutamate(in). The catalysed reaction is 3 Na(+)(out) + phosphate(out) = 3 Na(+)(in) + phosphate(in). It catalyses the reaction chloride(in) = chloride(out). Its activity is regulated as follows. The L-glutamate uniporter activity exhibits a biphasic dependence on chloride concentration. Chloride channel activity is allosterically activated by lumenal H(+) and Cl(-) leading to synaptic vesicles acidification. The glutamate transport activity is allosterically activated by lumenal H(+) and Cl(-), preventing non-vesicular L-glutamate release. Functionally, multifunctional transporter that transports L-glutamate as well as multiple ions such as chloride, sodium and phosphate. At the synaptic vesicle membrane, mainly functions as an uniporter that mediates the uptake of L-glutamate into synaptic vesicles at presynaptic nerve terminals of excitatory neural cells. The L-glutamate uniporter activity is electrogenic and is driven by the proton electrochemical gradient, mainly by the electrical gradient established by the vacuolar H(+)-ATPase across the synaptic vesicle membrane. In addition, functions as a chloride channel that allows a chloride permeation through the synaptic vesicle membrane that affects the proton electrochemical gradient and promotes synaptic vesicles acidification. At the plasma membrane, following exocytosis, functions as a symporter of Na(+) and phosphate from the extracellular space to the cytoplasm allowing synaptic phosphate homeostasis regulation. The symporter activity is electrogenic. Moreover, operates synergistically with SLC18A3/VACHT under a constant H(+) gradient, thereby allowing striatal vesicular acetylcholine uptake. This is Vesicular glutamate transporter 3 from Danio rerio (Zebrafish).